The primary structure comprises 615 residues: Alpha-fetoprotein (615 aa).

An N-terminal signal peptide occupies residues 1-15 (MAVLPLSGAIRLSRG). A Cell attachment site motif is present at residues 14-16 (RGD). Albumin domains lie at 27 to 218 (WAKK…RRQA), 223 to 415 (KPIR…ELKK), and 416 to 609 (HIYE…VLVT). Intrachain disulfides connect Cys109–Cys121 and Cys120–Cys131. 2 N-linked (GlcNAc...) asparagine glycosylation sites follow: Asn137 and Asn157. Intrachain disulfides connect Cys155–Cys200, Cys199–Cys213, Cys236–Cys282, Cys281–Cys289, Cys301–Cys315, Cys314–Cys325, Cys396–Cys405, Cys428–Cys458, and Cys457–Cys468. Residues 283 to 285 (RGD) carry the Cell attachment site motif. N-linked (GlcNAc...) asparagine glycosylation occurs at Asn472. Intrachain disulfides connect Cys485/Cys501, Cys500/Cys511, Cys538/Cys593, and Cys592/Cys601.

Belongs to the ALB/AFP/VDB family. Dimeric and trimeric forms have been found in addition to the monomeric form. Post-translationally, sulfated.

The protein localises to the secreted. Functionally, binds copper, nickel, and fatty acids as well as, and bilirubin less well than, serum albumin. The chain is Alpha-fetoprotein (AFP) from Gallus gallus (Chicken).